The following is a 250-amino-acid chain: 4-hydroxy-tetrahydrodipicolinate reductase (250 aa).

NAD(+) is bound by residues G10 to I15, G78 to T80, and A105 to F108. The Proton donor/acceptor role is filled by H135. H136 is a (S)-2,3,4,5-tetrahydrodipicolinate binding site. K139 acts as the Proton donor in catalysis. (S)-2,3,4,5-tetrahydrodipicolinate is bound at residue G145–T146. Residues R158–A177 are disordered.

Belongs to the DapB family.

The protein localises to the cytoplasm. The catalysed reaction is (S)-2,3,4,5-tetrahydrodipicolinate + NAD(+) + H2O = (2S,4S)-4-hydroxy-2,3,4,5-tetrahydrodipicolinate + NADH + H(+). The enzyme catalyses (S)-2,3,4,5-tetrahydrodipicolinate + NADP(+) + H2O = (2S,4S)-4-hydroxy-2,3,4,5-tetrahydrodipicolinate + NADPH + H(+). It participates in amino-acid biosynthesis; L-lysine biosynthesis via DAP pathway; (S)-tetrahydrodipicolinate from L-aspartate: step 4/4. Functionally, catalyzes the conversion of 4-hydroxy-tetrahydrodipicolinate (HTPA) to tetrahydrodipicolinate. The sequence is that of 4-hydroxy-tetrahydrodipicolinate reductase from Streptomyces griseus subsp. griseus (strain JCM 4626 / CBS 651.72 / NBRC 13350 / KCC S-0626 / ISP 5235).